The following is a 100-amino-acid chain: UPF0213 protein YhbQ (100 aa).

Positions T2–R77 constitute a GIY-YIG domain.

Belongs to the UPF0213 family.

The protein is UPF0213 protein YhbQ of Escherichia coli O81 (strain ED1a).